The following is a 305-amino-acid chain: UDP-3-O-acyl-N-acetylglucosamine deacetylase (305 aa).

His79, His238, and Asp242 together coordinate Zn(2+). Catalysis depends on His265, which acts as the Proton donor.

It belongs to the LpxC family. It depends on Zn(2+) as a cofactor.

It catalyses the reaction a UDP-3-O-[(3R)-3-hydroxyacyl]-N-acetyl-alpha-D-glucosamine + H2O = a UDP-3-O-[(3R)-3-hydroxyacyl]-alpha-D-glucosamine + acetate. The protein operates within glycolipid biosynthesis; lipid IV(A) biosynthesis; lipid IV(A) from (3R)-3-hydroxytetradecanoyl-[acyl-carrier-protein] and UDP-N-acetyl-alpha-D-glucosamine: step 2/6. In terms of biological role, catalyzes the hydrolysis of UDP-3-O-myristoyl-N-acetylglucosamine to form UDP-3-O-myristoylglucosamine and acetate, the committed step in lipid A biosynthesis. This chain is UDP-3-O-acyl-N-acetylglucosamine deacetylase, found in Escherichia coli O45:K1 (strain S88 / ExPEC).